Consider the following 450-residue polypeptide: Probable glycine dehydrogenase (decarboxylating) subunit 1 (450 aa).

This sequence belongs to the GcvP family. N-terminal subunit subfamily. In terms of assembly, the glycine cleavage system is composed of four proteins: P, T, L and H. In this organism, the P 'protein' is a heterodimer of two subunits.

It carries out the reaction N(6)-[(R)-lipoyl]-L-lysyl-[glycine-cleavage complex H protein] + glycine + H(+) = N(6)-[(R)-S(8)-aminomethyldihydrolipoyl]-L-lysyl-[glycine-cleavage complex H protein] + CO2. In terms of biological role, the glycine cleavage system catalyzes the degradation of glycine. The P protein binds the alpha-amino group of glycine through its pyridoxal phosphate cofactor; CO(2) is released and the remaining methylamine moiety is then transferred to the lipoamide cofactor of the H protein. The polypeptide is Probable glycine dehydrogenase (decarboxylating) subunit 1 (Desulfotalea psychrophila (strain LSv54 / DSM 12343)).